A 604-amino-acid chain; its full sequence is MCGIMGAVSERDISKVLLEGLRRLEYRGYDSAGIAVIDSQDRLKRVRIQGKVQNLADAMQETAIAGNTGIAHTRWATHGKPSEQNAHPHLSHGEIALVHNGIIENHEHLRQQLITYGYQFTSETDTEVAAHLIHYHYQQHENLLLAVQKSAAEMQGAFALGVIHQKRPEELVAIRKGSPLVLGFGIGENFIASDALALRSFAQSVIYMEEGDSACVTTQDIKVYDSNRILVQRATHPLNSDSEIVNKGPYRHFMLKEIFEQSKVITDTLESRINSIDVLRASFGEKASHIFPMVKNIHIVACGTSYHAGMIAKYWLESLAGLPTQVEIASEYRYRDVVVPDNTLFITVSQSGETADTLAALFKAKQSNYLASLAICNVATSTLVREADCVFLTRAGIEIGVASTKAFTTQLAAFLMLAAALCKDNRAQEVLRQLQELPACCERVLQMNEEVESLASLFVNKVHALFLGRGVQYPVALEGALKLKEISYIHAEAYPAGELKHGPLALVDKDMPVIAVAPNDELLDKLKSNLHEVSARGGQLFVFVDDSQNWKANGARLIKVPSCGAWLAPIIYTIPLQLLAYHVAVAKGTDVDQPRNLAKSVTVE.

The active-site Nucleophile; for GATase activity is Cys-2. A Glutamine amidotransferase type-2 domain is found at 2 to 219 (CGIMGAVSER…EGDSACVTTQ (218 aa)). SIS domains lie at 279–427 (LRAS…DNRA) and 454–594 (LASL…VDQP). The active-site For Fru-6P isomerization activity is Lys-599.

In terms of assembly, homodimer.

It is found in the cytoplasm. The enzyme catalyses D-fructose 6-phosphate + L-glutamine = D-glucosamine 6-phosphate + L-glutamate. Functionally, catalyzes the first step in hexosamine metabolism, converting fructose-6P into glucosamine-6P using glutamine as a nitrogen source. The polypeptide is Glutamine--fructose-6-phosphate aminotransferase [isomerizing] (Legionella pneumophila (strain Lens)).